A 114-amino-acid polypeptide reads, in one-letter code: uncharacterized protein (114 aa).

The tract at residues 1 to 24 (MFGACYKQPLKPSGSEPPAEECRM) is disordered.

In terms of tissue distribution, expressed in kidney and liver.

This is an uncharacterized protein from Homo sapiens (Human).